The following is a 466-amino-acid chain: Adenosylhomocysteinase (466 aa).

Substrate-binding residues include Thr57, Asp132, and Glu192. Thr193–Thr195 lines the NAD(+) pocket. 2 residues coordinate substrate: Lys222 and Asp226. NAD(+)-binding positions include Asn227, Gly256 to Gly261, Glu279, Asn314, Ile335 to His337, and Asn380.

Belongs to the adenosylhomocysteinase family. It depends on NAD(+) as a cofactor.

The protein localises to the cytoplasm. It catalyses the reaction S-adenosyl-L-homocysteine + H2O = L-homocysteine + adenosine. It functions in the pathway amino-acid biosynthesis; L-homocysteine biosynthesis; L-homocysteine from S-adenosyl-L-homocysteine: step 1/1. Its function is as follows. May play a key role in the regulation of the intracellular concentration of adenosylhomocysteine. The protein is Adenosylhomocysteinase of Brucella anthropi (strain ATCC 49188 / DSM 6882 / CCUG 24695 / JCM 21032 / LMG 3331 / NBRC 15819 / NCTC 12168 / Alc 37) (Ochrobactrum anthropi).